The primary structure comprises 873 residues: Bifunctional uridylyltransferase/uridylyl-removing enzyme (873 aa).

The tract at residues M1–I332 is uridylyltransferase. Residues I333–T692 form a uridylyl-removing region. One can recognise an HD domain in the interval V451–L573. ACT domains are found at residues E693 to R773 and L800 to P873.

It belongs to the GlnD family. It depends on Mg(2+) as a cofactor.

It carries out the reaction [protein-PII]-L-tyrosine + UTP = [protein-PII]-uridylyl-L-tyrosine + diphosphate. The enzyme catalyses [protein-PII]-uridylyl-L-tyrosine + H2O = [protein-PII]-L-tyrosine + UMP + H(+). Its activity is regulated as follows. Uridylyltransferase (UTase) activity is inhibited by glutamine, while glutamine activates uridylyl-removing (UR) activity. Its function is as follows. Modifies, by uridylylation and deuridylylation, the PII regulatory proteins (GlnB and homologs), in response to the nitrogen status of the cell that GlnD senses through the glutamine level. Under low glutamine levels, catalyzes the conversion of the PII proteins and UTP to PII-UMP and PPi, while under higher glutamine levels, GlnD hydrolyzes PII-UMP to PII and UMP (deuridylylation). Thus, controls uridylylation state and activity of the PII proteins, and plays an important role in the regulation of nitrogen assimilation and metabolism. The sequence is that of Bifunctional uridylyltransferase/uridylyl-removing enzyme from Vibrio vulnificus (strain YJ016).